Consider the following 274-residue polypeptide: Probable endonuclease LCL3 (274 aa).

A helical membrane pass occupies residues 15-32 (AVLSIILTGSTLTLIYTY). Positions 53 to 261 (HWLYGKVTSV…RSRKKGLWIQ (209 aa)) constitute a TNase-like domain. Residue R151 is part of the active site. Position 156 (D156) interacts with Ca(2+). Catalysis depends on residues E159 and R199.

Belongs to the LCL3 family.

It localises to the mitochondrion. The protein localises to the membrane. The sequence is that of Probable endonuclease LCL3 (LCL3) from Saccharomyces cerevisiae (strain Lalvin EC1118 / Prise de mousse) (Baker's yeast).